A 778-amino-acid chain; its full sequence is IQ domain-containing protein E (778 aa).

Disordered regions lie at residues 1–71 (MSLG…LSSR) and 83–108 (SSKQ…HPPS). Low complexity predominate over residues 37-49 (KPPSTSPKSPYYS). Positions 83–101 (SSKQGSVAQPPSPTLTSEH) are enriched in polar residues. Residues 157-323 (LHMQKSDVDL…DLDRMLSNSP (167 aa)) adopt a coiled-coil conformation. Residue Ser-322 is modified to Phosphoserine. 4 disordered regions span residues 348-392 (KKVS…EDLP), 443-462 (ETAR…LREE), 474-529 (EEAK…SEER), and 573-612 (LVRS…AEEN). Residues 352 to 362 (SSESPKQSTSE) are compositionally biased toward low complexity. The stretch at 398 to 486 (EEQEHLQGTV…KREEKNSFVA (89 aa)) forms a coiled coil. 2 IQ domains span residues 553–582 (LDEA…PDSR) and 615–644 (QEEA…REIA). Low complexity predominate over residues 581–598 (SRSPSLPGLLSPLNQSSP). The span at 651–662 (TVSLTPSGSASP) shows a compositional bias: polar residues. The segment at 651–778 (TVSLTPSGSA…LPRKKSPSPF (128 aa)) is disordered. Residue Ser-661 is modified to Phosphoserine. Basic and acidic residues predominate over residues 672-686 (IRKELCASEELRETS). Over residues 739-752 (PSPPELQPLSPPPV) the composition is skewed to pro residues.

As to quaternary structure, component of the EvC complex composed of EFCAB7, IQCE, EVC2 and EVC; built from two subcomplexes, EVC2:EVC and EFCAB7:IQCE. Interacts (via N-terminus) with EFCAB7 (via EF-hands 1 and 2); this interaction anchors the EVC-EVC2 complex in a signaling microdomain at the base of cilia and stimulates the Hedgehog (Hh) pathway. Interacts with EVC2 (via N-terminal end). Interacts with EVC.

Its subcellular location is the cell projection. It is found in the cilium membrane. Its function is as follows. Component of the EvC complex that positively regulates ciliary Hedgehog (Hh) signaling. Required for proper limb morphogenesis. The sequence is that of IQ domain-containing protein E (Iqce) from Mus musculus (Mouse).